We begin with the raw amino-acid sequence, 513 residues long: MAISKVWISLLLALAVVLSAPAARAEEAAAAEEAAAPEAVLTLHADNFDDAIGQHPFILVEFYAPWCGHCKSLAPEYEKAAQLLSKHDPAIVLAKVDANDEKNKPLAGKYEVQGFPTLKIFRNGGKSIQEYKGPREAEGIVEYLKKQVGPASKEIKAPEDATYLEDGKIHIVGVFTEFSGPEFTNFLEVAEKLRSYYDFGHTVHANHLPRGDAAVERPVVRLFKPFDELVVDSKDFDVSALEKFIDASSTPKVVIFDKNPDNHPYLLKFFQSNAPKAMLFLNFSTGPFESFKSAYYGAVEEFSGKDVKFLIGDIESSQGAFQYFGLKVDQAPLILIQDGDSKKFLKEHVEAGQIVAWLKDYFDGKLTPFRKSEPIPEANNEPVKVVVADNVHDVVFKSGKNVLIEFYAPWCGHCKKLAPILDEAAATLQSEEDVVIAKMDATENDVPGEFDVQGYPTLYFVTPSGKKVSYEGGRTADEIVDYIRKNKETAGQAAAATEKAAEPAATEPLKDEL.

Residues 1-25 (MAISKVWISLLLALAVVLSAPAARA) form the signal peptide. The Thioredoxin 1 domain occupies 26–149 (EEAAAAEEAA…IVEYLKKQVG (124 aa)). Residues C67 and C70 each act as nucleophile in the active site. The cysteines at positions 67 and 70 are disulfide-linked. An N-linked (GlcNAc...) asparagine glycan is attached at N282. The region spanning 369–488 (FRKSEPIPEA…IVDYIRKNKE (120 aa)) is the Thioredoxin 2 domain. Catalysis depends on nucleophile residues C411 and C414. C411 and C414 form a disulfide bridge. A compositionally biased stretch (low complexity) spans 491 to 507 (GQAAAATEKAAEPAATE). Residues 491–513 (GQAAAATEKAAEPAATEPLKDEL) form a disordered region. Positions 510–513 (KDEL) match the Prevents secretion from ER motif.

Belongs to the protein disulfide isomerase family.

The protein localises to the endoplasmic reticulum lumen. The catalysed reaction is Catalyzes the rearrangement of -S-S- bonds in proteins.. Functionally, participates in the folding of proteins containing disulfide bonds, may be involved in glycosylation, prolyl hydroxylation and triglyceride transfer. This is Protein disulfide-isomerase (PDI) from Hordeum vulgare (Barley).